Consider the following 487-residue polypeptide: N-succinylglutamate 5-semialdehyde dehydrogenase (487 aa).

The tract at residues 1–23 (MTHFIKGQWHTGKGHDVASSNPA) is disordered. Position 220–225 (220–225 (GSSRTG)) interacts with NAD(+). Catalysis depends on residues Glu-243 and Cys-277.

It belongs to the aldehyde dehydrogenase family. AstD subfamily.

It carries out the reaction N-succinyl-L-glutamate 5-semialdehyde + NAD(+) + H2O = N-succinyl-L-glutamate + NADH + 2 H(+). The protein operates within amino-acid degradation; L-arginine degradation via AST pathway; L-glutamate and succinate from L-arginine: step 4/5. Functionally, catalyzes the NAD-dependent reduction of succinylglutamate semialdehyde into succinylglutamate. This chain is N-succinylglutamate 5-semialdehyde dehydrogenase, found in Shewanella oneidensis (strain ATCC 700550 / JCM 31522 / CIP 106686 / LMG 19005 / NCIMB 14063 / MR-1).